Reading from the N-terminus, the 107-residue chain is Iron-binding protein IscA (107 aa).

Fe cation contacts are provided by Cys-35, Cys-99, and Cys-101.

Belongs to the HesB/IscA family. In terms of assembly, homodimer; may form tetramers and higher multimers. It depends on Fe cation as a cofactor.

Functionally, is able to transfer iron-sulfur clusters to apo-ferredoxin. Multiple cycles of [2Fe2S] cluster formation and transfer are observed, suggesting that IscA acts catalytically. Recruits intracellular free iron so as to provide iron for the assembly of transient iron-sulfur cluster in IscU in the presence of IscS, L-cysteine and the thioredoxin reductase system TrxA/TrxB. The chain is Iron-binding protein IscA from Pectobacterium carotovorum subsp. carotovorum (strain PC1).